The primary structure comprises 428 residues: Histidinol dehydrogenase (428 aa).

The NAD(+) site is built by Tyr125, Gln186, and Asn209. Positions 232, 254, and 257 each coordinate substrate. Zn(2+) contacts are provided by Gln254 and His257. Active-site proton acceptor residues include Glu322 and His323. Substrate is bound by residues His323, Asp356, Glu410, and His415. Asp356 is a Zn(2+) binding site. Zn(2+) is bound at residue His415.

Belongs to the histidinol dehydrogenase family. It depends on Zn(2+) as a cofactor.

It carries out the reaction L-histidinol + 2 NAD(+) + H2O = L-histidine + 2 NADH + 3 H(+). The protein operates within amino-acid biosynthesis; L-histidine biosynthesis; L-histidine from 5-phospho-alpha-D-ribose 1-diphosphate: step 9/9. In terms of biological role, catalyzes the sequential NAD-dependent oxidations of L-histidinol to L-histidinaldehyde and then to L-histidine. The polypeptide is Histidinol dehydrogenase (Lactiplantibacillus plantarum (strain ATCC BAA-793 / NCIMB 8826 / WCFS1) (Lactobacillus plantarum)).